Here is a 995-residue protein sequence, read N- to C-terminus: Putative pentatricopeptide repeat-containing protein At5g09950 (995 aa).

PPR repeat units lie at residues 35–65 (DVYL…MPLR), 66–100 (NCVS…GIFS), 101–137 (NQYA…SYAV), 138–169 (DAVV…IEVK), 170–204 (NSVS…GSRP), 205–241 (TEYT…GLLT), 242–276 (DLFV…NAVT), 278–303 (NGLM…MNSM), 307–342 (SPES…VITT), 348–378 (MVGI…MTDK), 379–413 (DSVS…DILP), 414–448 (GSFT…GIDL), 449–483 (NVSV…DQVS), 484–515 (WNSI…GQKL), 516–550 (NRIT…NIAD), 551–581 (EATT…MAER), 583–617 (DNVT…GQRL), 618–652 (DSFM…CLES), 653–683 (DVVV…MPVR), 684–718 (NSYS…GQTP), 720–750 (DHVT…MSDS), and 756–786 (RIEH…MPMK). The tract at residues 791-868 (IWRTVLGACC…EAGYSWVTMK (78 aa)) is type E motif. The segment at 869–899 (DGVHMFVAGDKSHPDADVIYKKLKELNRKMR) is type E(+) motif. The type DYW motif stretch occupies residues 900 to 995 (DAGYVPQTGF…DGACSCSDFW (96 aa)).

This sequence belongs to the PPR family. PCMP-H subfamily.

This is Putative pentatricopeptide repeat-containing protein At5g09950 (PCMP-H35) from Arabidopsis thaliana (Mouse-ear cress).